The primary structure comprises 396 residues: uncharacterized protein (396 aa).

Lys219 carries the post-translational modification N6-(pyridoxal phosphate)lysine.

This sequence belongs to the class-V pyridoxal-phosphate-dependent aminotransferase family. The cofactor is pyridoxal 5'-phosphate.

It localises to the cytoplasm. Its subcellular location is the nucleus. This is an uncharacterized protein from Schizosaccharomyces pombe (strain 972 / ATCC 24843) (Fission yeast).